The primary structure comprises 39 residues: Hementin (39 aa).

A divalent metal cation serves as cofactor. In terms of tissue distribution, expressed mainly in the posterior salivary glands and, to a lesser extent, in the anterior salivary glands and secreted into the proboscis (at protein level).

It localises to the secreted. With respect to regulation, inhibited by EDTA, cysteine, DTT and sodium phosphate. Partially inhibited by EGTA, citrate, Tris and glycine. Not inhibited by DFP, PMSF, iodoacetic acid and leupeptin. Requires sodium chloride concentrations higher than 0.15 M for activity. In terms of biological role, metalloprotease with anticoagulant activity. Cleaves fibrinogen Aalpha (FGA), gamma (FGG) and Bbeta (FGB) chains after positions 'Asn-121', 'Lys-160' and 'Pro-102', respectively. Breaks down cross-linked and non-cross-linked fibrin clots. Prevents and reverts platelet aggregation induced by ADP and collagen. Prevents thrombin-induced platelet clotting. Does not affect plasma levels of coagulation factors prothrombin (F2), V (F5), VII (F7), VIII (F8), IX (F9), X (F10), XI (F11), XII (F12), plasma kallikrein (KLKB1) and kininogen-1 (KNG1). This is Hementin from Haementeria ghilianii (Amazon leech).